The chain runs to 303 residues: MNPQELKSILSHGLLSFPVTDFNAQGDFNPAGYIKRLEWLAPYGASALFAAGGTGEFFSLAASEYSQVIKTAVDTCATSVPILAGVGGSTRQAIEYAQEAERLGAKGLLLLPHYLTEASQDGVAAHVEAVCKSVNIGVVVYNRNVCRLNADLLEKLAERCPNLIGYKDGLGDIELMVSIRRRLGERFSYLGGLPTAEVYAAAYKALGVPVYSSAVFNFVPKTAMDFYSAIARDDHAAVAKLIDDFFLPYLDIRNRKAGYAVSIVKAGAKIAGYDAGPVRTPLTDLTAEEYEMLAALMDKMGPQ.

It belongs to the DapA family.

It catalyses the reaction 5-dehydro-4-deoxy-D-glucarate + H(+) = 2,5-dioxopentanoate + CO2 + H2O. It participates in carbohydrate acid metabolism; D-glucarate degradation; 2,5-dioxopentanoate from D-glucarate: step 2/2. In Pseudomonas putida (strain GB-1), this protein is Probable 5-dehydro-4-deoxyglucarate dehydratase.